The chain runs to 321 residues: NADPH-dependent codeinone reductase 1-5 (321 aa).

T27 and D51 together coordinate NADPH. Residues Y56 and H119 each act as proton donor in the active site. H119 lines the substrate pocket. NADPH contacts are provided by Q187, S214, L216, S264, and R269.

This sequence belongs to the aldo/keto reductase family. As to expression, latex secreting cells (laticifer cells). Expressed constitutively and ubiquitously with highest levels in capsules.

The protein localises to the cytoplasm. It localises to the cytosol. It carries out the reaction codeine + NADP(+) = codeinone + NADPH + H(+). The catalysed reaction is neopine + NADP(+) = neopinone + NADPH + H(+). It catalyses the reaction morphine + NADP(+) = morphinone + NADPH + H(+). The enzyme catalyses neomorphine + NADP(+) = neomorphinone + NADPH + H(+). The protein operates within alkaloid biosynthesis; morphine biosynthesis. Its function is as follows. NADPH-dependent codeinone reductase involved in biosynthesis of morphinan-type benzylisoquinoline and opiate alkaloids natural products. Reduces codeinone to codeine in the penultimate step in morphine biosynthesis. Can use morphinone, hydrocodone and hydromorphone as substrate during reductive reaction with NADPH as cofactor, and morphine and dihydrocodeine as substrate during oxidative reaction with NADP as cofactor. Converts morphinone to morphine, and neomorphinone to neomorphine. Reduces irreversibly neopinone, a spontaneous isomer of codeinone, to neopine; in planta, neopine levels are limited to low levels. The chain is NADPH-dependent codeinone reductase 1-5 from Papaver somniferum (Opium poppy).